The sequence spans 155 residues: Deoxyuridine 5'-triphosphate nucleotidohydrolase (155 aa).

Substrate contacts are provided by residues Arg-74–Gly-76, Asn-87, and Leu-91–Asp-93.

It belongs to the dUTPase family. The cofactor is Mg(2+).

It catalyses the reaction dUTP + H2O = dUMP + diphosphate + H(+). It participates in pyrimidine metabolism; dUMP biosynthesis; dUMP from dCTP (dUTP route): step 2/2. In terms of biological role, this enzyme is involved in nucleotide metabolism: it produces dUMP, the immediate precursor of thymidine nucleotides and it decreases the intracellular concentration of dUTP so that uracil cannot be incorporated into DNA. This is Deoxyuridine 5'-triphosphate nucleotidohydrolase from Xanthomonas axonopodis pv. citri (strain 306).